The primary structure comprises 238 residues: MSEDLAKQLASYKAQLQQVEAALSGNGENEDLLKLKKDLQEVIELTKDLLSTQPSETLASSDSFASTQPTHSWKVGDKCMAIWSEDGQCYEAEIEEIDEENGTAAITFAGYGNAEVTPLLNLKPVEEGRKAKEDSGNKPMSKKEMIAQQREYKKKKALKKAQRIKELEQEREDQKVKWQQFNNRAYSKNKKGQVKRSIFASPESVTGKVGVGTCGIADKPMTQYQDTSKYNVRHLMPQ.

In terms of domain architecture, Tudor spans 72 to 132; that stretch reads SWKVGDKCMA…KPVEEGRKAK (61 aa). Residues 142-160 carry the Nuclear localization signal motif; sequence KKEMIAQQREYKKKKALKK. Ser-201 carries the phosphoserine modification. Position 219 is an N6-acetyllysine (Lys-219).

This sequence belongs to the SMN family. In terms of assembly, associates with spliceosomes. Associates with U4/U5/U6 tri-snRNP and with U2 snRNP.

It is found in the nucleus speckle. The protein localises to the nucleus. Its subcellular location is the cajal body. Functionally, involved in spliceosome assembly. This is Survival of motor neuron-related-splicing factor 30 (SMNDC1) from Pongo abelii (Sumatran orangutan).